We begin with the raw amino-acid sequence, 197 residues long: Probable GTP-binding protein EngB (197 aa).

The region spanning 25–197 (SAPEIAFAGR…VRDEFFKFTR (173 aa)) is the EngB-type G domain. GTP contacts are provided by residues 33–40 (GRSNVGKS), 60–64 (GCTRQ), 79–82 (DLPG), 146–149 (TKID), and 177–179 (MSI). Positions 40 and 62 each coordinate Mg(2+).

Belongs to the TRAFAC class TrmE-Era-EngA-EngB-Septin-like GTPase superfamily. EngB GTPase family. Mg(2+) serves as cofactor.

Its function is as follows. Necessary for normal cell division and for the maintenance of normal septation. This is Probable GTP-binding protein EngB from Wolbachia pipientis wMel.